Consider the following 123-residue polypeptide: Probable prefoldin subunit 4 (123 aa).

It belongs to the prefoldin subunit beta family. In terms of assembly, heterohexamer of two PFD-alpha type and four PFD-beta type subunits.

Binds specifically to cytosolic chaperonin (c-CPN) and transfers target proteins to it. Binds to nascent polypeptide chain and promotes folding in an environment in which there are many competing pathways for nonnative proteins. In Schizosaccharomyces pombe (strain 972 / ATCC 24843) (Fission yeast), this protein is Probable prefoldin subunit 4.